The primary structure comprises 329 residues: MAQSTLYSRVLGTGSYLPPDRVTNQELADRLAKDGIETSDEWIVARTGIRARHFAAPDVTTSDLALVAAQRAIEAADVDPQSIDLIIVATSTPDFVFPSTACLLQNKLGIKNGGAAFDVQAVCSGFAYALATADSFIRTGQHRTALVIGAETFSRILDFKDRTTCVLFGDGAGAVVLSASEEPGILGSALHADGSYSNILCTPGNVNRGVIAGSAFLHMDGQAVFKLAVNVLEKVAVEALSKAELASEQVDWLIPHQANIRIMTSTCRKLGLPQERMIVTVDEHGNTSAASIPLALDVAVRDGRIKRGQHVLIEGVGGGFTWGASVFRF.

Active-site residues include Cys123 and His256. The tract at residues 257–261 is ACP-binding; the sequence is QANIR. Asn286 is a catalytic residue.

The protein belongs to the thiolase-like superfamily. FabH family. As to quaternary structure, homodimer.

The protein localises to the cytoplasm. It catalyses the reaction malonyl-[ACP] + acetyl-CoA + H(+) = 3-oxobutanoyl-[ACP] + CO2 + CoA. Its pathway is lipid metabolism; fatty acid biosynthesis. Catalyzes the condensation reaction of fatty acid synthesis by the addition to an acyl acceptor of two carbons from malonyl-ACP. Catalyzes the first condensation reaction which initiates fatty acid synthesis and may therefore play a role in governing the total rate of fatty acid production. Possesses both acetoacetyl-ACP synthase and acetyl transacylase activities. Its substrate specificity determines the biosynthesis of branched-chain and/or straight-chain of fatty acids. In Burkholderia pseudomallei (strain 1710b), this protein is Beta-ketoacyl-[acyl-carrier-protein] synthase III.